Consider the following 293-residue polypeptide: Immediate early response gene 5-like protein (293 aa).

It belongs to the IER family.

This chain is Immediate early response gene 5-like protein (ier5l), found in Xenopus laevis (African clawed frog).